The sequence spans 549 residues: Plant intracellular Ras-group-related LRR protein 4 (549 aa).

Residues 119–140 (SPSSNGSVSSRPPLPPATTTAA) are compositionally biased toward low complexity. Residues 119–167 (SPSSNGSVSSRPPLPPATTTAARSDSQSSLNFSERAPVRPKDMVSRDDS) form a disordered region. The span at 141 to 150 (RSDSQSSLNF) shows a compositional bias: polar residues. Residues 154–167 (APVRPKDMVSRDDS) show a composition bias toward basic and acidic residues. Phosphoserine is present on serine 167. 11 LRR repeats span residues 245-268 (LSSLTSLDLSENHIVVLPNTIGGL), 269-291 (SSLTKLDLHSNRIGQLPESIGEL), 293-313 (NLVYLNLGSNQLSSLPSAFSR), 314-337 (LVRLEELDLSCNNLPILPESIGSL), 339-360 (SLKKLDVETNDIEEIPYSIGGC), 362-383 (SLIELRADYNKLKALPEAIGKI), 384-406 (TTLEILSVRYNNIRQLPTTMSSL), 407-430 (ASLKELDVSFNELESVPESLCFAT), 432-454 (LVKLNIGNNFADMVSLPRSIGNL), 455-476 (EMLEELDISNNQIRVLPDSFKM), and 478-500 (TKLRVFRAQENPLHIPPRDIAEK). The GVYW; degenerate motif lies at 501–508 (GPQAVVQY).

It belongs to the SHOC2 family. As to expression, widely expressed.

Its function is as follows. Leucine-rich repeat protein that likely mediates protein interactions, possibly in the context of signal transduction. This is Plant intracellular Ras-group-related LRR protein 4 (PIRL4) from Arabidopsis thaliana (Mouse-ear cress).